Here is a 516-residue protein sequence, read N- to C-terminus: MTDIHNHKILILDFGSQYTQLIARRVREVGVFCEIFPHDVAADFIKNYQAKGIILSGGPESVYDSDVKAPEIVFELGVPVLGICYGMQTMVMQHGGEVKGADQSEFGKAIINILNLTNNIFSNMEHEQLVWMSHSDKVTQTGEHFEIIASSTNAPVAAVAHKNKPFFGVQFHPETTHTENGKQIIENFVVNICGCDTLWNIENIIENDIKEIKQKVGTDKVILGLSGGVDSSVVAAILHQAIGDQLTCIFVDTGLLRLNEGDQVMQVFAEHMDINVIRINAKNRFLDALRGICDPEQKRKIIGKLFVDIFDEEAAKIENAKWLAQGTIYSDVIESAGNNQSKAHVIKSHHNVGGLPKEMKLKLLEPLRELFKDEVRKLGLGLGLPYNMLYRHPFPGPGLGVRILGEIKKEYVETLQKADAIFTEELYKHNLYHDVSQAFGVFLPIKSVGVVGDQRRYEYVIALRAVVSIDFMTATWANLPYDFLSLVSNRIVNEVKQVSRVVYDVTGKPPGTIEWE.

The region spanning 8-198 (KILILDFGSQ…VVNICGCDTL (191 aa)) is the Glutamine amidotransferase type-1 domain. Cysteine 84 acts as the Nucleophile in catalysis. Residues histidine 172 and glutamate 174 contribute to the active site. One can recognise a GMPS ATP-PPase domain in the interval 199-391 (WNIENIIEND…LGLPYNMLYR (193 aa)). An ATP-binding site is contributed by 226-232 (SGGVDSS).

As to quaternary structure, homodimer.

It catalyses the reaction XMP + L-glutamine + ATP + H2O = GMP + L-glutamate + AMP + diphosphate + 2 H(+). It participates in purine metabolism; GMP biosynthesis; GMP from XMP (L-Gln route): step 1/1. Its function is as follows. Catalyzes the synthesis of GMP from XMP. The chain is GMP synthase [glutamine-hydrolyzing] from Francisella tularensis subsp. holarctica (strain FTNF002-00 / FTA).